The following is a 439-amino-acid chain: Rhodopsin (439 aa).

N-linked (GlcNAc...) asparagine glycosylation occurs at asparagine 1. The Extracellular portion of the chain corresponds to 1–26 (NETWWYNPYMDIHSHWKQFDQVPAAV). A helical membrane pass occupies residues 27–51 (YYSLGIFIAICGIIGCAGNGIVIYL). The Cytoplasmic segment spans residues 52-63 (FTKTKSLQTPAN). Residues 64-90 (MFIINLAFSDFTFSLVNGFPMMTISCF) traverse the membrane as a helical segment. Topologically, residues 91–102 (LKHWVFGQAACK) are extracellular. Cysteine 101 and cysteine 179 are oxidised to a cystine. A helical transmembrane segment spans residues 103 to 124 (VYGLIGGIFGLTSIMTMTMISI). A 'Ionic lock' involved in activated form stabilization motif is present at residues 125–127 (DRY). The Cytoplasmic segment spans residues 125 to 144 (DRYNVIRRPMSASKKMSHRK). A helical transmembrane segment spans residues 145–165 (AFIMIVFVWIWSTIWAIGPIF). The Extracellular portion of the chain corresponds to 166-192 (GWGAYQLEGVLCNCSFDYITRDASTRS). The helical transmembrane segment at 193–217 (NIVCMYIFAFMFPIVVIFFCYFNIV) threads the bilayer. The Cytoplasmic segment spans residues 218–254 (MSVSNHEKEMAAMAKRLNAKELRKAQAGASAEMKLAK). Residues 255–276 (ISIVIVTQSLLSWSPYAIVALL) form a helical membrane-spanning segment. Residues 277–286 (AQFGPIEWVT) are Extracellular-facing. A helical membrane pass occupies residues 287–308 (PYAAQLPVMFAKASAIHNPMIY). N6-(retinylidene)lysine is present on lysine 298. Topologically, residues 309–439 (SVSHPKFREA…PQAAPPQGVD (131 aa)) are cytoplasmic. S-palmitoyl cysteine attachment occurs at residues cysteine 329 and cysteine 330. Over residues 369-381 (MMQKMQAQQQQQP) the composition is skewed to low complexity. The interval 369–439 (MMQKMQAQQQ…PQAAPPQGVD (71 aa)) is disordered. Pro residues predominate over residues 382 to 433 (AYPPQGYPPQGYPPPPPQGYPPQGYPPQGYPPQGYPPPPQGPPPQGPPPQAA).

This sequence belongs to the G-protein coupled receptor 1 family. Opsin subfamily. In terms of processing, contains one covalently linked retinal chromophore. Upon light absorption, the covalently bound 11-cis-retinal is converted to all-trans-retinal. After hydrolysis of the Schiff base and release of the covalently bound all-trans-retinal, active rhodopsin is regenerated by binding of a fresh molecule of 11-cis-retinal.

The protein localises to the cell projection. It is found in the rhabdomere membrane. Photoreceptor required for image-forming vision at low light intensity. Light-induced isomerization of 11-cis to all-trans retinal triggers a conformational change that activates signaling via G-proteins. Signaling mediates the activation of phospholipase C. Subsequent receptor phosphorylation mediates displacement of the bound G-protein alpha subunit by arrestin and terminates signaling. This chain is Rhodopsin (RHO), found in Alloteuthis subulata (Squid).